A 90-amino-acid polypeptide reads, in one-letter code: Phosphocarrier protein NPr (90 aa).

One can recognise an HPr domain in the interval 2-90 (TVKQTVEISN…ALFNAGFDED (89 aa)). H16 functions as the Pros-phosphohistidine intermediate in the catalytic mechanism.

Belongs to the HPr family.

It is found in the cytoplasm. Functionally, component of the phosphoenolpyruvate-dependent nitrogen-metabolic phosphotransferase system (nitrogen-metabolic PTS), that seems to be involved in regulating nitrogen metabolism. The phosphoryl group from phosphoenolpyruvate (PEP) is transferred to the phosphoryl carrier protein NPr by enzyme I-Ntr. Phospho-NPr then transfers it to EIIA-Ntr. Could function in the transcriptional regulation of sigma-54 dependent operons in conjunction with the NPr (PtsO) and EIIA-Ntr (PtsN) proteins. This chain is Phosphocarrier protein NPr (ptsO), found in Klebsiella oxytoca.